Consider the following 244-residue polypeptide: Cobalt transport protein CbiM (244 aa).

The signal sequence occupies residues 1 to 27 (MVEGMLKTNFRLLFLLIFLLIPTPVLA). Helical transmembrane passes span 36-56 (PVKWVIFWDLVTLPFIMVGFI), 65-85 (GPGAKLMLAFAGAFIFVLSAL), 102-122 (LAAILFGPFITTVLGFIVLIF), 134-154 (TLGANTFSMAVAGPLVAYGVY), 168-188 (IFLAAMLGDLVTYIVTSVQLA), and 196-216 (LFLSALKFMGIFALTQIPLAI).

This sequence belongs to the CbiM family. As to quaternary structure, forms an energy-coupling factor (ECF) transporter complex composed of an ATP-binding protein (A component, CbiO), a transmembrane protein (T component, CbiQ) and 2 possible substrate-capture proteins (S components, CbiM and CbiN) of unknown stoichimetry.

It is found in the cell membrane. It participates in cofactor biosynthesis; adenosylcobalamin biosynthesis. In terms of biological role, part of the energy-coupling factor (ECF) transporter complex CbiMNOQ involved in cobalt import. The protein is Cobalt transport protein CbiM of Carboxydothermus hydrogenoformans (strain ATCC BAA-161 / DSM 6008 / Z-2901).